The following is a 282-amino-acid chain: DNA processing protein DprA (282 aa).

This sequence belongs to the DprA/Smf family. In terms of assembly, homodimer; forms tail-to-tail dimers, forms nucleoprotein complex (NPC) which requires at least 30 nucleotides (nt) of ssDNA becoming optimal with 50 nt. Interacts with RecA, forms mixed DprA-RecA-ssDNA filaments. Interacts with ComFA and ComFC.

The protein localises to the cytoplasm. In terms of biological role, protein that helps load RecA onto ssDNA during transformation. Required for DNA transformation. Not required for DNA uptake but for a later stage of transformation. Thought to interact at the cell pole with newly imported transforming ssDNA which it binds cooperatively, protecting linear and circular ssDNA from nuclease action. Forms bridges between DNA segments. Favors the loading of RecA onto ssDNA and formation of RecA-DNA filaments, triggering RecA-catalysis of ATP-driven homologous DNA pairing. This chain is DNA processing protein DprA, found in Streptococcus pneumoniae (strain ATCC BAA-255 / R6).